A 507-amino-acid polypeptide reads, in one-letter code: MEILVPGQATLAQLEAIWREGRRARLAPEARPAVEAAAARVAAAAAGTAPVYGVNTGFGKLASLKIAPADTAQLQRNLILSHCCGVGEPMPPSTARLMMALKLLSLGRGASGVRWKIVALLEGMLAAGVTPVIPAQGSVGASGDLAPLAHMAAVMIGEGEAEVGGRRLPGAAALAHAGLAPVALGPKEGLALINGTQFSTAYALAGLFEGWRAAQAALVISALSTDAIMGSTAPLRPEIHALRGHAGQIEAAATMRALLEGSAIRESHREGDQRVQDPYCIRCQPQVTGAAMDVLRMAAGTLATEANAATDNPLVLSDGRIVSGGNFHAEPVGFAADMIALALSEIGAIAQRRVALMVDPTLSFDLPPFLTPEPGLNSGLMIAEVTTAALMSENKHMAAPTVTDSTPTSANQEDHVSMAAHGARRLGRMVENLAVILGTEAICAAQGVEFRAPLATSAPLGAVLARLRAEVPRLGADRILAPDLAAAARLVRTGALARAAGLPLPAL.

A cross-link (5-imidazolinone (Ala-Gly)) is located at residues 141–143 (ASG). At serine 142 the chain carries 2,3-didehydroalanine (Ser).

Belongs to the PAL/histidase family. Post-translationally, contains an active site 4-methylidene-imidazol-5-one (MIO), which is formed autocatalytically by cyclization and dehydration of residues Ala-Ser-Gly.

Its subcellular location is the cytoplasm. It catalyses the reaction L-histidine = trans-urocanate + NH4(+). Its pathway is amino-acid degradation; L-histidine degradation into L-glutamate; N-formimidoyl-L-glutamate from L-histidine: step 1/3. In Cereibacter sphaeroides (strain KD131 / KCTC 12085) (Rhodobacter sphaeroides), this protein is Histidine ammonia-lyase.